A 90-amino-acid chain; its full sequence is Antitoxin epsilon (90 aa).

Belongs to the epsilon antitoxin family. In the presence of the zeta toxin, forms an inactive PezA(2)PezT(2) heterotetramer.

Its function is as follows. Antitoxin component of a type II toxin-antitoxin (TA) system. Neutralizes the toxic effect of cognate zeta toxin. Part of a postsegregational killing (PSK) system involved in the killing of plasmid-free cells. Continuous synthesis of the epsilon antitoxin is required to counteract the zeta toxin. The polypeptide is Antitoxin epsilon (Streptococcus agalactiae).